The sequence spans 598 residues: UvrABC system protein C (598 aa).

The GIY-YIG domain occupies 14 to 91 (DSPGCYLHKD…IQKNMPKYNI (78 aa)). One can recognise a UVR domain in the interval 196–231 (DKIIEDLRSKMLAASEEMAFERAAEYRDLISGIATM).

This sequence belongs to the UvrC family. In terms of assembly, interacts with UvrB in an incision complex.

It is found in the cytoplasm. Its function is as follows. The UvrABC repair system catalyzes the recognition and processing of DNA lesions. UvrC both incises the 5' and 3' sides of the lesion. The N-terminal half is responsible for the 3' incision and the C-terminal half is responsible for the 5' incision. In Streptococcus pyogenes serotype M3 (strain ATCC BAA-595 / MGAS315), this protein is UvrABC system protein C.